A 366-amino-acid polypeptide reads, in one-letter code: MNKVVLLCRPGFEKECAAEITDKAGQREIFGFARVKENAGYVIYECYQPDDGDKLIRELPFSSLIFARQWFVVGELLQHLPPEDRITPIVGMLQGVVEKGGELRVEVADTNESKELLKFCRKFTVPLRAALRDAGVLANYETPKRPVVHVFFIAPGCCYTGYSYSNNNSPFYMGIPRLKFPAEAPSRSTLKLEEAFHVFIPADEWDERLANGMWAVDLGACPGGWTYQLVKRNMWVYSVDNGPMAQSLMDTGQVTWLREDGFKFRPTRSNISWMVCDMVEKPAKVAALMAQWLVNGWCRETIFNLKLPMKKRYEEVSHNLAYIQAQLDEHGINAQIQARQLYHDREEVTVHVRRIWAAVGGRRDER.

S-adenosyl-L-methionine is bound by residues Ser188, Cys221–Gly224, Asp240, Asp260, and Asp277. The active-site Proton acceptor is Lys306.

This sequence belongs to the class I-like SAM-binding methyltransferase superfamily. RNA methyltransferase RlmE family. RlmM subfamily. As to quaternary structure, monomer.

The protein resides in the cytoplasm. The catalysed reaction is cytidine(2498) in 23S rRNA + S-adenosyl-L-methionine = 2'-O-methylcytidine(2498) in 23S rRNA + S-adenosyl-L-homocysteine + H(+). In terms of biological role, catalyzes the 2'-O-methylation at nucleotide C2498 in 23S rRNA. The polypeptide is Ribosomal RNA large subunit methyltransferase M (Shigella flexneri serotype 5b (strain 8401)).